We begin with the raw amino-acid sequence, 169 residues long: Probable calcium-binding protein CML13 (169 aa).

Residues 1–26 form a disordered region; that stretch reads MSTVKGQTRRERPRGARPHGLTKQKR. A compositionally biased stretch (basic residues) spans 15–24; it reads GARPHGLTKQ. 4 EF-hand domains span residues 24-59, 60-95, 97-132, and 133-168; these read QKRQEIKEAFDLFDTDNSGTIDAKELNVAMRALGFE, MTEEQINQMIADVDKDGSGSIDYEEFEHMMTAKIGE, DSKEELTKAFSIIDQDKNGKISDVDIQRIAKELGEN, and FTYQEIQEMVQEADRNGDGEIDFDEFIRMMRRTGYG. Ca(2+) contacts are provided by aspartate 37, aspartate 39, serine 41, threonine 43, glutamate 48, aspartate 73, aspartate 75, serine 77, serine 79, glutamate 84, aspartate 110, aspartate 112, asparagine 114, lysine 116, aspartate 121, aspartate 146, asparagine 148, aspartate 150, glutamate 152, and glutamate 157.

In terms of biological role, potential calcium sensor. The sequence is that of Probable calcium-binding protein CML13 (CML13) from Oryza sativa subsp. japonica (Rice).